The following is a 189-amino-acid chain: Interferon alpha-17 (189 aa).

A signal peptide spans 1–23 (MALSFSLLMAVLVLSYKSICSLG). 2 disulfides stabilise this stretch: cysteine 24–cysteine 122 and cysteine 52–cysteine 162.

The protein belongs to the alpha/beta interferon family.

Its subcellular location is the secreted. Its function is as follows. Produced by macrophages, IFN-alpha have antiviral activities. Interferon stimulates the production of two enzymes: a protein kinase and an oligoadenylate synthetase. In Homo sapiens (Human), this protein is Interferon alpha-17 (IFNA17).